We begin with the raw amino-acid sequence, 382 residues long: Galactokinase (382 aa).

34-37 (EHTD) contacts substrate. 124-130 (GAGLSSS) contributes to the ATP binding site. Mg(2+) is bound by residues S130 and E162. Residue D174 is the Proton acceptor of the active site. Y223 contacts substrate.

This sequence belongs to the GHMP kinase family. GalK subfamily.

The protein resides in the cytoplasm. It catalyses the reaction alpha-D-galactose + ATP = alpha-D-galactose 1-phosphate + ADP + H(+). It participates in carbohydrate metabolism; galactose metabolism. Catalyzes the transfer of the gamma-phosphate of ATP to D-galactose to form alpha-D-galactose-1-phosphate (Gal-1-P). In Salmonella choleraesuis (strain SC-B67), this protein is Galactokinase.